A 178-amino-acid chain; its full sequence is ATP-dependent protease subunit HslV (178 aa).

Threonine 7 is a catalytic residue. The Na(+) site is built by glycine 162, cysteine 165, and threonine 168.

This sequence belongs to the peptidase T1B family. HslV subfamily. In terms of assembly, a double ring-shaped homohexamer of HslV is capped on each side by a ring-shaped HslU homohexamer. The assembly of the HslU/HslV complex is dependent on binding of ATP.

It localises to the cytoplasm. The catalysed reaction is ATP-dependent cleavage of peptide bonds with broad specificity.. Its activity is regulated as follows. Allosterically activated by HslU binding. Functionally, protease subunit of a proteasome-like degradation complex believed to be a general protein degrading machinery. This chain is ATP-dependent protease subunit HslV, found in Janthinobacterium sp. (strain Marseille) (Minibacterium massiliensis).